The sequence spans 217 residues: Cytochrome b5 domain-containing protein 1 (217 aa).

Residues 6–72 (PRFYTPREVS…NPKTGDVKTH (67 aa)) form the Cytochrome b5 heme-binding domain. Heme contacts are provided by His41 and His72.

This sequence belongs to the cytochrome b5 family.

The protein resides in the cytoplasm. The protein localises to the cytoskeleton. Its subcellular location is the cilium axoneme. Its function is as follows. Radial spoke stalk protein that binds heme under oxidizing conditions. Required for the coordinated beating of multiple cilia maybe by functioning in a redox signaling pathway. This chain is Cytochrome b5 domain-containing protein 1 (cyb5d1), found in Xenopus tropicalis (Western clawed frog).